Consider the following 304-residue polypeptide: Oxygen-dependent coproporphyrinogen-III oxidase (304 aa).

Ser93 contacts substrate. A divalent metal cation is bound by residues His97 and His107. The active-site Proton donor is the His107. A substrate-binding site is contributed by 109–111 (NVR). A divalent metal cation-binding residues include His146 and His176. Positions 241-276 (YVEFNLVYDRGTLFGLQSGGRTESILMSLPPQVRWG) are important for dimerization. Substrate is bound at residue 259 to 261 (GGR).

Belongs to the aerobic coproporphyrinogen-III oxidase family. As to quaternary structure, homodimer. It depends on a divalent metal cation as a cofactor.

It localises to the cytoplasm. The catalysed reaction is coproporphyrinogen III + O2 + 2 H(+) = protoporphyrinogen IX + 2 CO2 + 2 H2O. Its pathway is porphyrin-containing compound metabolism; protoporphyrin-IX biosynthesis; protoporphyrinogen-IX from coproporphyrinogen-III (O2 route): step 1/1. Its function is as follows. Involved in the heme biosynthesis. Catalyzes the aerobic oxidative decarboxylation of propionate groups of rings A and B of coproporphyrinogen-III to yield the vinyl groups in protoporphyrinogen-IX. This is Oxygen-dependent coproporphyrinogen-III oxidase from Pseudomonas syringae pv. syringae (strain B728a).